Consider the following 389-residue polypeptide: P2X purinoceptor 6 (389 aa).

At 1–45 the chain is on the cytoplasmic side; it reads MQLQPAGTGNMASAAAAALVSWGFLDYKTEKYVLTRNCRVGVSQR. A helical transmembrane segment spans residues 46-66; sequence LLQLAVVVYVIGWALLAKKGY. Topologically, residues 67 to 335 are extracellular; that stretch reads QERDLAPQTS…LVTGQAGKFA (269 aa). Intrachain disulfides connect Cys-129-Cys-179, Cys-140-Cys-163, and Cys-146-Cys-173. Residues Asn-167, Asn-197, and Asn-212 are each glycosylated (N-linked (GlcNAc...) asparagine). Disulfide bonds link Cys-230-Cys-240 and Cys-274-Cys-283. The helical transmembrane segment at 336-356 threads the bilayer; it reads LIPTAITVGTGAAWLGMVTFL. Residues 357-389 lie on the Cytoplasmic side of the membrane; it reads CDLLLLYVDREAGFYWRTKYEEARAPKTTTNSS.

It belongs to the P2X receptor family. As to quaternary structure, unlike most P2RXs, P2RX6 does not seem to form homotrimers. P2RX6 are likely to form as obligate heteromers with other P2RXs subunits. Forms heterotrimer with P2RX2 with a variable subunit stoichiometry determined by subunit expression levels. Forms heterotrimer with P2RX4; functional differences between homomeric P2RX4 and P2RX4/6 heterotrimer are minor. Forms a P2RX2/P2RX4/P2RX6 heterotrimer. Interacts with SF3A1; resulting in a reduction of the splicing activity. Post-translationally, N-glycosylated. N-linked glycosylation can affect trafficking to the membrane and function. Predominantly expressed in skeletal muscle. Also expressed in lung.

The protein localises to the cell membrane. Its subcellular location is the endoplasmic reticulum. The protein resides in the nucleus. It localises to the nucleus inner membrane. The catalysed reaction is Ca(2+)(in) = Ca(2+)(out). Acts as a modulatory subunit rather than a functional channel. Unlike other P2XRs members, P2RX6 does not seem to form functional homotrimers. P2RX6 requires the presence of P2RX4 or P2RX2 to form functional heterotrimeric receptors at the plasma membrane. P2RX6 can be translocated to the nucleus, where it interacts with the splicing factor (SF3A1), to reduce the incidence of mRNA splicing. May function as a nuclear regulator of post-transcriptional modifications in neurons. The chain is P2X purinoceptor 6 (P2rx6) from Mus musculus (Mouse).